A 308-amino-acid chain; its full sequence is D-alanine--D-alanine ligase (308 aa).

The ATP-grasp domain occupies 104–301 (KQIWQGSDLP…FDELCVAILE (198 aa)). 130–185 (IAELGLPVIIKPVHEGSSVGMSKVEKAEDFAAAIEKATQHDAVVMAEKWITGREFT) lines the ATP pocket. Asp255, Glu268, and Asn270 together coordinate Mg(2+).

The protein belongs to the D-alanine--D-alanine ligase family. Mg(2+) serves as cofactor. Mn(2+) is required as a cofactor.

Its subcellular location is the cytoplasm. It catalyses the reaction 2 D-alanine + ATP = D-alanyl-D-alanine + ADP + phosphate + H(+). It participates in cell wall biogenesis; peptidoglycan biosynthesis. Its function is as follows. Cell wall formation. This chain is D-alanine--D-alanine ligase, found in Acinetobacter baumannii (strain SDF).